The chain runs to 174 residues: Adenylate kinase (174 aa).

An NMP region spans residues 12-41 (STGDMLRAAIKAGTPLGLEAKKIIDEGGLV). AMP-binding positions include Thr13, Arg18, 39 to 41 (GLV), 67 to 70 (GFPR), and Gln74. The LID stretch occupies residues 104-141 (GRRVHLASGRTYHVTYNPPKVEGKDDVTGEDLIQRDDD). ATP is bound by residues Arg105 and 114-115 (TY). 2 residues coordinate AMP: Arg138 and Arg149.

Belongs to the adenylate kinase family. Monomer.

The protein localises to the cytoplasm. It carries out the reaction AMP + ATP = 2 ADP. It participates in purine metabolism; AMP biosynthesis via salvage pathway; AMP from ADP: step 1/1. Catalyzes the reversible transfer of the terminal phosphate group between ATP and AMP. Plays an important role in cellular energy homeostasis and in adenine nucleotide metabolism. The polypeptide is Adenylate kinase (Neisseria cinerea).